A 612-amino-acid polypeptide reads, in one-letter code: Dihydroxy-acid dehydratase (612 aa).

D81 contributes to the Mg(2+) binding site. C122 contributes to the [2Fe-2S] cluster binding site. Mg(2+) contacts are provided by D123 and K124. At K124 the chain carries N6-carboxylysine. C195 provides a ligand contact to [2Fe-2S] cluster. E491 is a binding site for Mg(2+). Residue S517 is the Proton acceptor of the active site.

This sequence belongs to the IlvD/Edd family. As to quaternary structure, homodimer. The cofactor is [2Fe-2S] cluster. Mg(2+) is required as a cofactor.

It catalyses the reaction (2R)-2,3-dihydroxy-3-methylbutanoate = 3-methyl-2-oxobutanoate + H2O. It carries out the reaction (2R,3R)-2,3-dihydroxy-3-methylpentanoate = (S)-3-methyl-2-oxopentanoate + H2O. Its pathway is amino-acid biosynthesis; L-isoleucine biosynthesis; L-isoleucine from 2-oxobutanoate: step 3/4. The protein operates within amino-acid biosynthesis; L-valine biosynthesis; L-valine from pyruvate: step 3/4. Functions in the biosynthesis of branched-chain amino acids. Catalyzes the dehydration of (2R,3R)-2,3-dihydroxy-3-methylpentanoate (2,3-dihydroxy-3-methylvalerate) into 2-oxo-3-methylpentanoate (2-oxo-3-methylvalerate) and of (2R)-2,3-dihydroxy-3-methylbutanoate (2,3-dihydroxyisovalerate) into 2-oxo-3-methylbutanoate (2-oxoisovalerate), the penultimate precursor to L-isoleucine and L-valine, respectively. The protein is Dihydroxy-acid dehydratase of Rhizobium meliloti (strain 1021) (Ensifer meliloti).